Here is a 527-residue protein sequence, read N- to C-terminus: Catalase (527 aa).

Position 2 is an N-acetylalanine (alanine 2). Serine 9 carries the post-translational modification Phosphoserine. Catalysis depends on residues histidine 75 and asparagine 148. NADP(+)-binding residues include histidine 194, serine 201, arginine 203, and asparagine 213. Lysine 221 bears the N6-succinyllysine mark. At lysine 233 the chain carries N6-acetyllysine. Lysine 237, tryptophan 303, histidine 305, and lysine 306 together coordinate NADP(+). Residue lysine 306 is modified to N6-acetyllysine; alternate. Lysine 306 is modified (N6-succinyllysine; alternate). Position 358 (tyrosine 358) interacts with heme. Phosphoserine occurs at positions 417 and 422. Position 480 is an N6-acetyllysine; alternate (lysine 480). Lysine 480 is modified (N6-succinyllysine; alternate). Residue lysine 499 is modified to N6-acetyllysine. Threonine 511 bears the Phosphothreonine mark. Phosphoserine is present on residues serine 515 and serine 517. The Microbody targeting signal; atypical motif lies at 524–527; the sequence is KANL.

Belongs to the catalase family. Homotetramer. Interacts (via microbody targeting signal) with PEX5, monomeric form interacts with PEX5, leading to its translocation into peroxisomes. Heme serves as cofactor. Requires NADP(+) as cofactor.

Its subcellular location is the peroxisome matrix. The enzyme catalyses 2 H2O2 = O2 + 2 H2O. In terms of biological role, catalyzes the degradation of hydrogen peroxide (H(2)O(2)) generated by peroxisomal oxidases to water and oxygen, thereby protecting cells from the toxic effects of hydrogen peroxide. Promotes growth of cells including T-cells, B-cells, myeloid leukemia cells, melanoma cells, mastocytoma cells and normal and transformed fibroblast cells. The sequence is that of Catalase (CAT) from Homo sapiens (Human).